A 577-amino-acid polypeptide reads, in one-letter code: 2-succinyl-5-enolpyruvyl-6-hydroxy-3-cyclohexene-1-carboxylate synthase (577 aa).

The protein belongs to the TPP enzyme family. MenD subfamily. Homodimer. Mg(2+) serves as cofactor. Mn(2+) is required as a cofactor. Requires thiamine diphosphate as cofactor.

The catalysed reaction is isochorismate + 2-oxoglutarate + H(+) = 5-enolpyruvoyl-6-hydroxy-2-succinyl-cyclohex-3-ene-1-carboxylate + CO2. It functions in the pathway quinol/quinone metabolism; 1,4-dihydroxy-2-naphthoate biosynthesis; 1,4-dihydroxy-2-naphthoate from chorismate: step 2/7. Its pathway is quinol/quinone metabolism; menaquinone biosynthesis. Functionally, catalyzes the thiamine diphosphate-dependent decarboxylation of 2-oxoglutarate and the subsequent addition of the resulting succinic semialdehyde-thiamine pyrophosphate anion to isochorismate to yield 2-succinyl-5-enolpyruvyl-6-hydroxy-3-cyclohexene-1-carboxylate (SEPHCHC). The protein is 2-succinyl-5-enolpyruvyl-6-hydroxy-3-cyclohexene-1-carboxylate synthase of Enterococcus faecalis (strain ATCC 700802 / V583).